We begin with the raw amino-acid sequence, 455 residues long: Regulatory protein LuxO (455 aa).

The Response regulatory domain occupies 1-112 (MVEDTASVAA…RLRVTVNNAI (112 aa)). A 4-aspartylphosphate modification is found at D47. The region spanning 132 to 361 (FIGSSQTMQA…LQNVLRNVVV (230 aa)) is the Sigma-54 factor interaction domain. Residues 160–167 (GESGTGKE) and 223–232 (ADGGTLFLDE) each bind ATP.

Its function is as follows. Involved in the regulation of different processes depending on the cell density. Acts together with sigma-54 to repress, perhaps indirectly, some genes. The chain is Regulatory protein LuxO (luxO) from Vibrio cholerae serotype O1 (strain ATCC 39315 / El Tor Inaba N16961).